The sequence spans 321 residues: uncharacterized protein (321 aa).

The segment covering 1 to 12 (MQGGREVGRESV) has biased composition (basic and acidic residues). The segment at 1–85 (MQGGREVGRE…GWGEFEGFQE (85 aa)) is disordered. Residues 53–67 (NANSSRLDEGLSSSR) are compositionally biased toward polar residues.

This is an uncharacterized protein from Rattus norvegicus (Rat).